Here is a 128-residue protein sequence, read N- to C-terminus: DNA-directed RNA polymerase subunit omega (128 aa).

Belongs to the RNA polymerase subunit omega family. The RNAP catalytic core consists of 2 alpha, 1 beta, 1 beta' and 1 omega subunit. When a sigma factor is associated with the core the holoenzyme is formed, which can initiate transcription.

It catalyses the reaction RNA(n) + a ribonucleoside 5'-triphosphate = RNA(n+1) + diphosphate. Functionally, promotes RNA polymerase assembly. Latches the N- and C-terminal regions of the beta' subunit thereby facilitating its interaction with the beta and alpha subunits. This chain is DNA-directed RNA polymerase subunit omega, found in Azorhizobium caulinodans (strain ATCC 43989 / DSM 5975 / JCM 20966 / LMG 6465 / NBRC 14845 / NCIMB 13405 / ORS 571).